Consider the following 273-residue polypeptide: Dermonecrotic toxin LspaSicTox-alphaIA1ii (273 aa).

The active site involves histidine 5. Residues glutamate 25 and aspartate 27 each coordinate Mg(2+). Histidine 41 (nucleophile) is an active-site residue. 2 cysteine pairs are disulfide-bonded: cysteine 45–cysteine 51 and cysteine 47–cysteine 190. Residue aspartate 85 participates in Mg(2+) binding.

The protein belongs to the arthropod phospholipase D family. Class II subfamily. The cofactor is Mg(2+). Expressed by the venom gland.

The protein resides in the secreted. The enzyme catalyses an N-(acyl)-sphingosylphosphocholine = an N-(acyl)-sphingosyl-1,3-cyclic phosphate + choline. It carries out the reaction an N-(acyl)-sphingosylphosphoethanolamine = an N-(acyl)-sphingosyl-1,3-cyclic phosphate + ethanolamine. It catalyses the reaction a 1-acyl-sn-glycero-3-phosphocholine = a 1-acyl-sn-glycero-2,3-cyclic phosphate + choline. The catalysed reaction is a 1-acyl-sn-glycero-3-phosphoethanolamine = a 1-acyl-sn-glycero-2,3-cyclic phosphate + ethanolamine. Functionally, dermonecrotic toxins cleave the phosphodiester linkage between the phosphate and headgroup of certain phospholipids (sphingolipid and lysolipid substrates), forming an alcohol (often choline) and a cyclic phosphate. This toxin acts on sphingomyelin (SM). It may also act on ceramide phosphoethanolamine (CPE), lysophosphatidylcholine (LPC) and lysophosphatidylethanolamine (LPE), but not on lysophosphatidylserine (LPS), and lysophosphatidylglycerol (LPG). It acts by transphosphatidylation, releasing exclusively cyclic phosphate products as second products. Induces dermonecrosis, hemolysis, increased vascular permeability, edema, inflammatory response, and platelet aggregation. This is Dermonecrotic toxin LspaSicTox-alphaIA1ii from Loxosceles spadicea (Recluse spider).